Consider the following 269-residue polypeptide: Regulatory protein RecX (269 aa).

It belongs to the RecX family.

The protein localises to the cytoplasm. In terms of biological role, modulates RecA activity. The protein is Regulatory protein RecX of Geobacillus kaustophilus (strain HTA426).